Here is a 298-residue protein sequence, read N- to C-terminus: Serpentine receptor class delta-34 (298 aa).

Transmembrane regions (helical) follow at residues Ser-10 to Val-30, Ala-54 to Pro-74, Met-99 to Tyr-119, Leu-158 to Ile-178, Leu-207 to Ile-227, and Val-242 to Ile-262.

The protein belongs to the nematode receptor-like protein srd family.

Its subcellular location is the membrane. The chain is Serpentine receptor class delta-34 (srd-34) from Caenorhabditis elegans.